Reading from the N-terminus, the 592-residue chain is Protein US23 (592 aa).

Positions 407–491 (PRSLGDGEEE…NNVVPNVDRR (85 aa)) are disordered. The span at 460–481 (ADDEEQGEDDDDSGAEPMEPEE) shows a compositional bias: acidic residues.

This sequence belongs to the herpesviridae US22 family.

It localises to the virion tegument. This chain is Protein US23 (US23), found in Homo sapiens (Human).